A 366-amino-acid polypeptide reads, in one-letter code: PTI1-like tyrosine-protein kinase 2 (366 aa).

Positions 8–23 (GDKKGDSDLSNEEVHL) are enriched in basic and acidic residues. The disordered stretch occupies residues 8 to 50 (GDKKGDSDLSNEEVHLKSPWQNSEANQKNQKPQAVVKPEAQKE). The segment covering 26–39 (PWQNSEANQKNQKP) has biased composition (polar residues). Residues 71 to 353 (FGSKSLIGEG…IVVKALQPLL (283 aa)) enclose the Protein kinase domain. ATP-binding positions include 77 to 85 (IGEGSYGRV) and lysine 99. The active-site Proton acceptor is the aspartate 203.

Belongs to the protein kinase superfamily. Tyr protein kinase family. Interacts with OXI1. In terms of processing, autophosphorylated and phosphorylated by OXI1.

The catalysed reaction is L-tyrosyl-[protein] + ATP = O-phospho-L-tyrosyl-[protein] + ADP + H(+). Its activity is regulated as follows. Strongly activated in response to phosphatidic acid (PA) and xylanase in a OXI1- and PDK1-dependent manner, and, to a lesser extent, by hydrogen peroxide and flagellin in a OXI1-dependent manner. Functionally, probable tyrosine-protein kinase involved in oxidative burst-mediated signaling leading to specific genes expression. The protein is PTI1-like tyrosine-protein kinase 2 (PTI12) of Arabidopsis thaliana (Mouse-ear cress).